The following is a 321-amino-acid chain: Isoaspartyl peptidase (321 aa).

The active-site Nucleophile is threonine 179. Residues 207 to 210 and 230 to 233 each bind substrate; these read RVGD and TGTG.

The protein belongs to the Ntn-hydrolase family. As to quaternary structure, heterotetramer of two alpha and two beta chains arranged as a dimer of alpha/beta heterodimers. Autocleaved. Generates the alpha and beta subunits. The N-terminal residue of the beta subunit is thought to be responsible for the nucleophile hydrolase activity. In terms of processing, both subunits undergo further processing at their C-termini. The overexpressed alpha subunit seems to consist of residues 2-161, with an oxidized Met residue and a tightly coordinated Na(+), whereas the overexpressed beta subunit is processed to residue 315 and has 3 oxidized Met residues. Processing of the alpha subunit is inhibited by Zn(2+).

It carries out the reaction Cleavage of a beta-linked Asp residue from the N-terminus of a polypeptide.. Functionally, degrades proteins damaged by L-isoaspartyl residue formation (also known as beta-Asp residues). Degrades L-isoaspartyl-containing di- and maybe also tripeptides. Also has L-asparaginase activity, although this may not be its principal function. Its function is as follows. May be involved in glutathione, and possibly other peptide, transport, although these results could also be due to polar effects of disruption. In Escherichia coli (strain K12), this protein is Isoaspartyl peptidase (iaaA).